Consider the following 246-residue polypeptide: NH(3)-dependent NAD(+) synthetase (246 aa).

Residue 29–36 coordinates ATP; that stretch reads GLSGGIDS. Asp35 contacts Mg(2+). Arg110 provides a ligand contact to deamido-NAD(+). Thr130 serves as a coordination point for ATP. A Mg(2+)-binding site is contributed by Glu135. 2 residues coordinate ATP: Lys159 and Ser181.

Belongs to the NAD synthetase family. As to quaternary structure, homodimer.

It catalyses the reaction deamido-NAD(+) + NH4(+) + ATP = AMP + diphosphate + NAD(+) + H(+). It participates in cofactor biosynthesis; NAD(+) biosynthesis; NAD(+) from deamido-NAD(+) (ammonia route): step 1/1. Its function is as follows. Catalyzes the ATP-dependent amidation of deamido-NAD to form NAD. Uses ammonia as a nitrogen source. This chain is NH(3)-dependent NAD(+) synthetase, found in Campylobacter jejuni subsp. jejuni serotype O:6 (strain 81116 / NCTC 11828).